Here is a 90-residue protein sequence, read N- to C-terminus: U7-theraphotoxin-Hhn1k (90 aa).

A signal peptide spans M1–S19. A propeptide spanning residues F20–E50 is cleaved from the precursor. Cystine bridges form between C51-C65 and C58-C70.

The protein belongs to the neurotoxin 10 (Hwtx-1) family. 13 (Hntx-13) subfamily. In terms of tissue distribution, expressed by the venom gland.

It localises to the secreted. In terms of biological role, ion channel inhibitor. The polypeptide is U7-theraphotoxin-Hhn1k (Cyriopagopus hainanus (Chinese bird spider)).